The sequence spans 476 residues: Adenosylhomocysteinase (476 aa).

The substrate site is built by T61, D140, and E200. Residue 201-203 (TTT) participates in NAD(+) binding. Residues K230 and D234 each contribute to the substrate site. NAD(+) is bound by residues N235, 264 to 269 (GYGDVG), E287, N322, 343 to 345 (IGH), and N389.

The protein belongs to the adenosylhomocysteinase family. The cofactor is NAD(+).

Its subcellular location is the cytoplasm. It catalyses the reaction S-adenosyl-L-homocysteine + H2O = L-homocysteine + adenosine. It functions in the pathway amino-acid biosynthesis; L-homocysteine biosynthesis; L-homocysteine from S-adenosyl-L-homocysteine: step 1/1. May play a key role in the regulation of the intracellular concentration of adenosylhomocysteine. The protein is Adenosylhomocysteinase of Acidovorax sp. (strain JS42).